The sequence spans 1359 residues: Probable protein NAP1 (1359 aa).

Residues 1267–1359 form a disordered region; it reads PSMKQNRADT…VSRSGPLSYK (93 aa). 2 stretches are compositionally biased toward basic and acidic residues: residues 1272 to 1282 and 1300 to 1310; these read NRADTTPRSHT and EGDRRTGERQL.

This sequence belongs to the HEM-1/HEM-2 family. In terms of assembly, binds PIR.

Its function is as follows. Involved in regulation of actin and microtubule organization. Part of a WAVE complex that activates the Arp2/3 complex. In Oryza sativa subsp. japonica (Rice), this protein is Probable protein NAP1 (NAP1).